The primary structure comprises 158 residues: Hypoxanthine DNA glycosylase (158 aa).

The active site involves N39.

It belongs to the uracil-DNA glycosylase (UDG) superfamily. Type 6 (HDG) family.

Functionally, excises hypoxanthine, a deamination product of adenine, from double-stranded DNA. Acts on double-stranded DNA containing G/I, T/I, A/I and C/I base pairs, but not on single-stranded inosine-containing DNA. Also has minor xanthine DNA glycosylase activity. Lacks any detectable uracil-DNA glycosylase activity. This is Hypoxanthine DNA glycosylase from Methanosarcina barkeri (strain Fusaro / DSM 804).